The chain runs to 238 residues: Putative pectate lyase X (238 aa).

The N-terminal stretch at 1-22 is a signal peptide; it reads MKYLLPTAAAGLLLLAAQPAMA. Residues aspartate 153, glutamate 188, and aspartate 192 each coordinate Ca(2+).

It belongs to the polysaccharide lyase 1 family. Ca(2+) serves as cofactor.

It catalyses the reaction Eliminative cleavage of (1-&gt;4)-alpha-D-galacturonan to give oligosaccharides with 4-deoxy-alpha-D-galact-4-enuronosyl groups at their non-reducing ends.. It functions in the pathway glycan metabolism; pectin degradation; 2-dehydro-3-deoxy-D-gluconate from pectin: step 2/5. Functionally, involved in maceration and soft-rotting of plant tissue. This is Putative pectate lyase X (PEL X) from Pectobacterium carotovorum (Erwinia carotovora).